Consider the following 497-residue polypeptide: 3-ketoacyl-CoA synthase 6 (497 aa).

2 helical membrane passes run 25 to 45 and 64 to 84; these read LVNHFLSFLLIPIMAIVAVEL and LVQVLCSSFFVIFISTVYFMS. An FAE domain is found at 81–370; that stretch reads YFMSKPRTIY…FLTSLIGRKI (290 aa). Catalysis depends on residues Cys-225, His-304, His-388, His-392, His-421, and Asn-425.

The protein belongs to the thiolase-like superfamily. Chalcone/stilbene synthases family. In terms of tissue distribution, in epidermal cells of aerial tissues and in the tapetum of anthers near maturity. Expressed in siliques, flowers and leaves.

It localises to the endoplasmic reticulum membrane. It catalyses the reaction a very-long-chain acyl-CoA + malonyl-CoA + H(+) = a very-long-chain 3-oxoacyl-CoA + CO2 + CoA. It functions in the pathway lipid metabolism; fatty acid biosynthesis. With respect to regulation, strongly inhibited by metazachlor and mefluidide. Contributes to cuticular wax and suberin biosynthesis. Involved in both decarbonylation and acyl-reduction wax synthesis pathways. Required for elongation of C24 fatty acids, an essential step of the cuticular wax production. Major condensing enzyme for stem wax and pollen coat lipid biosynthesis. This chain is 3-ketoacyl-CoA synthase 6, found in Arabidopsis thaliana (Mouse-ear cress).